A 400-amino-acid polypeptide reads, in one-letter code: Calsequestrin-2 (400 aa).

Residues 1-19 (MKRTHLFIVGVYVLSSCRA) form the signal peptide. A Phosphotyrosine modification is found at Tyr-282. Asn-335 carries N-linked (GlcNAc...) asparagine glycosylation. The interval 365-400 (VLSGKINTEDDDDEDDDDDNSDEEDNDDSDDDDDDE) is disordered. A compositionally biased stretch (acidic residues) spans 373 to 400 (EDDDDEDDDDDNSDEEDNDDSDDDDDDE).

The protein belongs to the calsequestrin family. In terms of assembly, monomer, homodimer and homooligomer. Mostly monomeric in the absence of calcium. Forms higher oligomers in a calcium-dependent manner. Dimers associate to form tetramers, that then form linear homomer chains. Interacts with ASPH and TRDN. Post-translationally, phosphorylation in the C-terminus, probably by CK2, moderately increases calcium buffering capacity. In terms of processing, N-glycosylated.

The protein localises to the sarcoplasmic reticulum lumen. Functionally, calsequestrin is a high-capacity, moderate affinity, calcium-binding protein and thus acts as an internal calcium store in muscle. Calcium ions are bound by clusters of acidic residues at the protein surface, especially at the interface between subunits. Can bind around 60 Ca(2+) ions. Regulates the release of lumenal Ca(2+) via the calcium release channel RYR2; this plays an important role in triggering muscle contraction. Plays a role in excitation-contraction coupling in the heart and in regulating the rate of heart beats. The chain is Calsequestrin-2 (CASQ2) from Pongo abelii (Sumatran orangutan).